We begin with the raw amino-acid sequence, 67 residues long: Conotoxin AbVIN (67 aa).

The signal sequence occupies residues 1–17 (VIIIAVLFLTACQLIAT). Positions 18 to 40 (ASYARSERKHPDLRLSSRNSKLS) are excised as a propeptide. 3 disulfide bridges follow: C43-C57, C50-C61, and C56-C66.

This sequence belongs to the conotoxin O1 superfamily. Expressed by the venom duct.

It localises to the secreted. This is Conotoxin AbVIN from Conus abbreviatus (Abbreviated cone).